The sequence spans 445 residues: Cyclic GMP-AMP phosphodiesterase SMPDL3A (445 aa).

The N-terminal stretch at M1 to G22 is a signal peptide. Residues D42 and H44 each contribute to the Zn(2+) site. C59 and C78 are oxidised to a cystine. N66 is a glycosylation site (N-linked (GlcNAc...) asparagine). D107 lines the Zn(2+) pocket. ATP is bound at residue H111. N128 carries an N-linked (GlcNAc...) asparagine glycan. A Zn(2+)-binding site is contributed by N148. Positions 148 and 149 each coordinate ATP. 2 N-linked (GlcNAc...) asparagine glycosylation sites follow: N219 and N235. H249 contributes to the Zn(2+) binding site. Y257 lines the ATP pocket. H290 and H292 together coordinate Zn(2+). N-linked (GlcNAc...) asparagine glycans are attached at residues N353 and N364. 2 disulfides stabilise this stretch: C417-C421 and C427-C440.

The protein belongs to the acid sphingomyelinase family. As to quaternary structure, monomer. Homodimer; homodimerizes following 2',3'-cGAMP-binding. The cofactor is Zn(2+). N-glycosylated. Detected in blood serum (at protein level).

It localises to the secreted. The catalysed reaction is 2',3'-cGAMP + H2O = 5'-pGpA(2'-5') + H(+). It catalyses the reaction 5'-pGpA(2'-5') + H2O = 5'-GpA(2'-5') + phosphate. The enzyme catalyses a ribonucleoside 5'-triphosphate + H2O = a ribonucleoside 5'-diphosphate + phosphate + H(+). It carries out the reaction ATP + H2O = ADP + phosphate + H(+). With respect to regulation, requires micromolar levels of Zn(2+) for activity. Inhibited by millimolar levels of Zn(2+). Cyclic-nucleotide phosphodiesterase that acts as a negative regulator of innate immunity by mediating degradation of 2',3'-cGAMP, thereby inhibiting the cGAS-STING signaling. Specifically linearizes 2',3'-cGAMP into 2'5'-bond pGpA and further hydrolyzes pGpA to produce GpA. Also has in vitro nucleotide phosphodiesterase activity with nucleoside triphosphates, such as ATP. Has in vitro activity with p-nitrophenyl-TMP. Has lower activity with nucleoside diphosphates, and no activity with nucleoside monophosphates. Has in vitro activity with CDP-choline, giving rise to CMP and phosphocholine. Has in vitro activity with CDP-ethanolamine. Does not have sphingomyelin phosphodiesterase activity. The sequence is that of Cyclic GMP-AMP phosphodiesterase SMPDL3A from Mus musculus (Mouse).